Consider the following 166-residue polypeptide: Endoribonuclease YbeY (166 aa).

Zn(2+) contacts are provided by His126, His130, and His136.

It belongs to the endoribonuclease YbeY family. The cofactor is Zn(2+).

The protein resides in the cytoplasm. Single strand-specific metallo-endoribonuclease involved in late-stage 70S ribosome quality control and in maturation of the 3' terminus of the 16S rRNA. The sequence is that of Endoribonuclease YbeY from Laribacter hongkongensis (strain HLHK9).